Consider the following 664-residue polypeptide: Threonine--tRNA ligase (664 aa).

The TGS domain maps to 1–64 (MSELLKITLP…TADAQLALVT (64 aa)). The catalytic stretch occupies residues 250-559 (DHRKLGNEMD…LIEHFAGRLP (310 aa)). Residues Cys355, His406, and His536 each coordinate Zn(2+).

It belongs to the class-II aminoacyl-tRNA synthetase family. Homodimer. Zn(2+) serves as cofactor.

Its subcellular location is the cytoplasm. The catalysed reaction is tRNA(Thr) + L-threonine + ATP = L-threonyl-tRNA(Thr) + AMP + diphosphate + H(+). In terms of biological role, catalyzes the attachment of threonine to tRNA(Thr) in a two-step reaction: L-threonine is first activated by ATP to form Thr-AMP and then transferred to the acceptor end of tRNA(Thr). Also edits incorrectly charged L-seryl-tRNA(Thr). This chain is Threonine--tRNA ligase, found in Novosphingobium aromaticivorans (strain ATCC 700278 / DSM 12444 / CCUG 56034 / CIP 105152 / NBRC 16084 / F199).